A 135-amino-acid polypeptide reads, in one-letter code: MFAKSATIAIVLAALAGFSAAVPTADCRTSKTCSSGKVALVAPAAPVGSCSTGKVQCCNSVEHSTQPHVNNLLLGLEHFGLVKGLIGGLTGNVGIQCSPLLLSGNSCTAQTACCENVHFNGLIAVGCSPVNLSLL.

Positions 1 to 21 (MFAKSATIAIVLAALAGFSAA) are cleaved as a signal peptide. 4 disulfide bridges follow: Cys-50–Cys-113, Cys-57–Cys-107, Cys-58–Cys-97, and Cys-114–Cys-127. Residue Asn-131 is glycosylated (N-linked (GlcNAc...) asparagine).

This sequence belongs to the fungal hydrophobin family. Self-assembles to form functional amyloid fibrils called rodlets. Self-assembly into fibrillar rodlets occurs spontaneously at hydrophobic:hydrophilic interfaces and the rodlets further associate laterally to form amphipathic monolayers.

It localises to the secreted. The protein resides in the cell wall. Aerial growth, conidiation, and dispersal of filamentous fungi in the environment rely upon a capability of their secreting small amphipathic proteins called hydrophobins (HPBs) with low sequence identity. Class I can self-assemble into an outermost layer of rodlet bundles on aerial cell surfaces, conferring cellular hydrophobicity that supports fungal growth, development and dispersal; whereas Class II form highly ordered films at water-air interfaces through intermolecular interactions but contribute nothing to the rodlet structure. This Pleurotus ostreatus (strain PC15) (Oyster mushroom) protein is Class I hydrophobin 15.